The primary structure comprises 317 residues: uncharacterized protein (317 aa).

A helical membrane pass occupies residues 11 to 31 (ALLLVIFGSLIVSFAIFFMVL). 3 PASTA domains span residues 33–100 (NNEI…FISK), 101–174 (GAII…LISK), and 180–241 (DKHV…TIAK).

It is found in the membrane. This is an uncharacterized protein from Borreliella burgdorferi (strain ATCC 35210 / DSM 4680 / CIP 102532 / B31) (Borrelia burgdorferi).